A 78-amino-acid polypeptide reads, in one-letter code: DNA-directed RNA polymerase subunit Rpo5 (78 aa).

The protein belongs to the archaeal Rpo5/eukaryotic RPB5 RNA polymerase subunit family. In terms of assembly, part of the RNA polymerase complex.

The protein localises to the cytoplasm. The enzyme catalyses RNA(n) + a ribonucleoside 5'-triphosphate = RNA(n+1) + diphosphate. Functionally, DNA-dependent RNA polymerase (RNAP) catalyzes the transcription of DNA into RNA using the four ribonucleoside triphosphates as substrates. The chain is DNA-directed RNA polymerase subunit Rpo5 from Methanococcoides burtonii (strain DSM 6242 / NBRC 107633 / OCM 468 / ACE-M).